We begin with the raw amino-acid sequence, 256 residues long: Triosephosphate isomerase (256 aa).

9-11 (NWK) serves as a coordination point for substrate. The active-site Electrophile is histidine 97. Glutamate 169 acts as the Proton acceptor in catalysis. Residues glycine 175, serine 214, and 235–236 (GG) contribute to the substrate site.

It belongs to the triosephosphate isomerase family. Homodimer.

The protein resides in the cytoplasm. The catalysed reaction is D-glyceraldehyde 3-phosphate = dihydroxyacetone phosphate. It functions in the pathway carbohydrate biosynthesis; gluconeogenesis. It participates in carbohydrate degradation; glycolysis; D-glyceraldehyde 3-phosphate from glycerone phosphate: step 1/1. Involved in the gluconeogenesis. Catalyzes stereospecifically the conversion of dihydroxyacetone phosphate (DHAP) to D-glyceraldehyde-3-phosphate (G3P). In Aliivibrio salmonicida (strain LFI1238) (Vibrio salmonicida (strain LFI1238)), this protein is Triosephosphate isomerase.